The primary structure comprises 412 residues: Elongation factor 1-gamma 2 (412 aa).

Residue S2 is modified to N-acetylserine. The 76-residue stretch at 2–77 (SQGTLYINRS…YLANQVADEK (76 aa)) folds into the GST N-terminal domain. The GST C-terminal domain occupies 86 to 217 (DVIEKSQILR…AEKALTYTPP (132 aa)). The segment at 216–253 (PPKKQKAEKPKAEKSKAEKKKDEAKPADDAAPAKKPKH) is disordered. Over residues 220-247 (QKAEKPKAEKSKAEKKKDEAKPADDAAP) the composition is skewed to basic and acidic residues. Positions 251-412 (PKHPLEALGK…KEIVDGKVLK (162 aa)) constitute an EF-1-gamma C-terminal domain.

The eukaryotic elongation factor 1 complex (eEF1) is probably a heterohexamer. Two trimeric complexes, each composed of eEF1A (TEF1 or TEF2), eEF1Balpha (EFB1) and eEF1Bgamma (CAM1 or TEF4), are probably dimerized via the eF1Bgamma subunits. The eEF1B subcomplex with the GEF activity is formed of eEF1Balpha and eEF1Bgamma. TEF4 interacts with EFB1.

Its subcellular location is the cytoplasm. It functions in the pathway protein biosynthesis; polypeptide chain elongation. Functionally, subunit of the eukaryotic elongation factor 1 complex (eEF1). Probably plays a role in anchoring the complex to other cellular components. In Saccharomyces cerevisiae (strain ATCC 204508 / S288c) (Baker's yeast), this protein is Elongation factor 1-gamma 2 (TEF4).